The primary structure comprises 149 residues: Calmodulin, striated muscle (149 aa).

4 EF-hand domains span residues 8–43 (EQIA…LGQN), 44–79 (PTEA…KMRD), 81–116 (DSEE…LGEK), and 117–149 (LTDE…MTEK). 15 residues coordinate Ca(2+): Asp-21, Asp-23, Asp-25, Cys-27, Glu-32, Asp-57, Asp-59, Ser-61, Thr-63, Glu-68, Asp-94, Asp-96, Asn-98, Tyr-100, and Glu-105. Lys-116 carries the N6,N6,N6-trimethyllysine modification. Ca(2+)-binding residues include Asp-130, Asn-132, Asp-134, Gln-136, and Glu-141.

This sequence belongs to the calmodulin family.

This Gallus gallus (Chicken) protein is Calmodulin, striated muscle (CCM1).